The chain runs to 342 residues: Dof zinc finger protein DOF4.6 (342 aa).

The segment at 21–54 (NTCPKPQPQPLQPQQPPSVGGERKARPEKDQAVN) is disordered. Over residues 25–36 (KPQPQPLQPQQP) the composition is skewed to pro residues. A compositionally biased stretch (basic and acidic residues) spans 41-51 (GERKARPEKDQ). A Dof-type zinc finger spans residues 53–107 (VNCPRCNSTNTKFCYYNNYSLTQPRYFCKGCRRYWTEGGSLRNIPVGGGSRKNKR). Residues cysteine 55, cysteine 58, cysteine 80, and cysteine 83 each contribute to the Zn(2+) site. The tract at residues 94–136 (RNIPVGGGSRKNKRSHSSSSDISNNHSDSTQPATKKHLSDHHH) is disordered. Positions 110–122 (SSSSDISNNHSDS) are enriched in low complexity. The span at 127–136 (TKKHLSDHHH) shows a compositional bias: basic residues.

As to expression, accumulates in the stele.

It localises to the nucleus. Transcription factor that binds specifically to a 5'-AA[AG]G-3' consensus core sequence. This chain is Dof zinc finger protein DOF4.6, found in Arabidopsis thaliana (Mouse-ear cress).